The following is a 562-amino-acid chain: Membrane protein insertase YidC (562 aa).

Residues Met-1–Leu-21 traverse the membrane as a helical segment. The interval Thr-42 to Leu-74 is disordered. Helical transmembrane passes span Leu-343–Leu-363, Ile-369–Phe-389, Leu-439–Leu-459, Trp-470–Met-490, and Pro-517–Val-537.

Belongs to the OXA1/ALB3/YidC family. Type 1 subfamily. Interacts with the Sec translocase complex via SecD. Specifically interacts with transmembrane segments of nascent integral membrane proteins during membrane integration.

The protein localises to the cell inner membrane. Required for the insertion and/or proper folding and/or complex formation of integral membrane proteins into the membrane. Involved in integration of membrane proteins that insert both dependently and independently of the Sec translocase complex, as well as at least some lipoproteins. Aids folding of multispanning membrane proteins. The sequence is that of Membrane protein insertase YidC from Pseudomonas syringae pv. tomato (strain ATCC BAA-871 / DC3000).